The chain runs to 315 residues: Ribose-phosphate pyrophosphokinase (315 aa).

Residues 37-39 (DGE) and 96-97 (RQ) each bind ATP. Mg(2+)-binding residues include His131 and Asp171. Residue Lys195 is part of the active site. D-ribose 5-phosphate-binding positions include Arg197, Asp221, and 225–229 (DTGGT).

Belongs to the ribose-phosphate pyrophosphokinase family. Class I subfamily. As to quaternary structure, homohexamer. The cofactor is Mg(2+).

It is found in the cytoplasm. The catalysed reaction is D-ribose 5-phosphate + ATP = 5-phospho-alpha-D-ribose 1-diphosphate + AMP + H(+). The protein operates within metabolic intermediate biosynthesis; 5-phospho-alpha-D-ribose 1-diphosphate biosynthesis; 5-phospho-alpha-D-ribose 1-diphosphate from D-ribose 5-phosphate (route I): step 1/1. Functionally, involved in the biosynthesis of the central metabolite phospho-alpha-D-ribosyl-1-pyrophosphate (PRPP) via the transfer of pyrophosphoryl group from ATP to 1-hydroxyl of ribose-5-phosphate (Rib-5-P). This chain is Ribose-phosphate pyrophosphokinase, found in Pasteurella multocida (strain Pm70).